A 2179-amino-acid chain; its full sequence is MNSLSWGAANAVLLLLLLAWASPTFISINRGVRVMKGHSAFLSGDDLKFAIPKEKDACKVEVVMNEPITQRVGKLTPQVFDCHFLPNEVKYVHNGCPILDEDTVKLRLYRFTERDTFIETFILWVYLLEPDCNIIHMSNNVLEVPEFNGLSQAIDKNLLRFDYDRMASLECTVSLDTARTRLPAHGQMVLGEPRPEEPRGDQPHSFFPESQLRAKLKCPGGSCTPGLKKIGSLKVSCEEFLLMGLRYQHLDPPSPNIDYISIQLDLTDTRSKIVYKSESAWLPVYIRAGIPNQIPKAAFMAVFILEVDQFILTSLTTSVLDCEEDETPKPLLVFNITKAPLQGYVTHLLDHTRPISSFTWKDLSDMQIAYQPPNSSHSERRHDEVELEVYDFFFERSAPMTVHISIRTADTNAPRVSWNTGLSLLEGQSRAITWEQFQVVDNDDIGAVRLVTVGGLQHGWLTLRGGKGFLFTVADLQAGVVRYHHDDSDSTKDFVVFRIFDGHHSIRHKFPINVLPKDDSPPFLITNVVIELEEGQTILIQGSMLRASDVDASDDYIFFNITKPPQAGEIMKKPGPGLIGYPVHGFLQRDLFNGIIYYRHFGGEIFEDSFQFVLWDSHEPPNLSVPQVATIHITPVDDQLPKEAPGVSRHLVVKETEVAYITKKQLHFIDSESYDRELVYTITTPPFFSFSHRHLDAGKLFMVDSIPKVVKNPTALELRSFTQHAVNYMKVAYMPPMQDIGPHCRDVQFTFSVSNQHGGTLHGICFNITILPVDNQVPEAFTNPLKVTEGGQSIISTEHILISDADTKLDNIDLSLRELPLHGRVELNGFPLNSGGTFSWGDLHTLKVRYQHDGTEVLQDDLLLEVTDGTNSAEFVLHVEVFPVNDEPPVLKADLMPVMNCSEGGEVVITSEYIFATDVDSDNLKLMFVIAREPQHGVVRRAGVTVDQFSQRDVISEAVTYKHTGGEIGLMPCFDTITLVVSDGEAGPFVNGCCYNGPNPSVPLHASFPVYDLNITVYPVDNQPPSIAIGPVFVVDEGCSTALTVNHLSATDPDTAADDLEFVLVSPPQFGYLENILPSVGFEKSNIGISIDSFQWKDMNAFHINYVQSRHLRIEPTADQFTVYVTDGKHHSLEIPFSIIINPTNDEAPDFVVQNITVCEGQMKELDSSIISAVDLDIPQDALLFSITQKPRHGLLIDRGFSKDFSENKQPANPHQKHAPVHSFSMELLKTGMRLTYMHDDSESLADDFTIQLSDGKHKILKTISVEVIPVNDEKPMLSKKAEIAMNMGETRIISSAILSAIDEDSPREKIYYVFERLPQNGQLQLKIGRDWVPLSPGMKCTQEEVDLNLLRYTHTGAMDSQNQDSFTFYLWDGNNRSPALDCQITIKDMEKGDIVILTKPLVVSKGDRGFLTTTTLLAVDGTDKPEELLYVITSPPRYGQIEYVHYPGVPITNFSQMDVVGQTVCYVHKSKVTVSSDRFRFIISNGLRTEHGVFEITLETVDRALPVVTRNKGLRLAQGAVGLLSPDLLQLTDPDTPAENLTFLLVQLPQHGQLYLWGTGLLQHNFTQQDVDSKNVAYRHSGGDSQTDCFTFMATDGTNQGFIVNGRVWEEPVLFTIQVDQLDKTAPRITLLHSPSQVGLLKNGCYGIYITSRVLKASDPDTEDDQIIFKILQGPKHGHLENTTTGEFIHEKFSQKDLNSKTILYIINPSLEVNSDTVEFQIMDPTGNSATPQILELKWSHIEWSQTEYEVCENVGLLPLEIIRRGYSMDSAFVGIKVNQVSAAVGKDFTVIPSKLIQFDPGMSTKMWNIAITYDGLEEDDEVFEVILNSPVNAVLGTKTKAAVKILDSKGGQCHPSYSSNQSKHSTWEKGIWHLLPPGSSSSTTSGSFHLERRPLPSSMQLAVIRGDTLRGFDSTDLSQRKLRTRGNGKTVRPSSVYRNGTDIIYNYHGIVSLKLEDDSFPTHKRKAKVSIISQPQKTIKVAELPQADKVESTTDSHFPRQDQLPSFPKNCTLELKGLFHFEEGIQKLYQCNGIAWKAWSPQTKDVEDKSCPAGWHQHSGYCHILITEQKGTWNAAAQACREQYLGNLVTVFSRQHMRWLWDIGGRKSFWIGLNDQVHAGHWEWIGGEPVAFTNGRRGPSQRSKLGKSCVLVQRQGKWQTKDCRRAKPHNYVCSRKL.

An N-terminal signal peptide occupies residues 1–21 (MNSLSWGAANAVLLLLLLAWA). The Cell attachment site signature appears at 199–201 (RGD). 3 CSPG repeats span residues 296–390 (KAAF…LEVY), 413–500 (APRV…FRIF), and 521–615 (PPFL…FVLW). N-linked (GlcNAc...) asparagine glycosylation is present at Asn335. Asn560 and Asn622 each carry an N-linked (GlcNAc...) asparagine glycan. CSPG repeat units lie at residues 642–754 (KEAP…FSVS), 776–867 (QVPE…LEVT), and 887–982 (EPPV…LVVS). The N-linked (GlcNAc...) asparagine glycan is linked to Asn1014. 6 CSPG repeats span residues 1024-1126 (PPSI…VYVT), 1147-1254 (EAPD…IQLS), 1275-1372 (KPML…FYLW), 1393-1485 (GDIV…FIIS), 1506-1596 (LPVV…FMAT), and 1628-1724 (PRIT…FQIM). Residue Asn1566 is glycosylated (N-linked (GlcNAc...) asparagine). In terms of domain architecture, Calx-beta spans 1731–1830 (ATPQILELKW…DDEVFEVILN (100 aa)). The Cell attachment site motif lies at 1907-1909 (RGD). Positions 2060 to 2174 (HSGYCHILIT…CRRAKPHNYV (115 aa)) constitute a C-type lectin domain. Cys2151 and Cys2165 are joined by a disulfide.

This sequence belongs to the FRAS1 family. In terms of assembly, interacts with FREM2.

It localises to the secreted. The protein resides in the extracellular space. Its subcellular location is the extracellular matrix. It is found in the basement membrane. In terms of biological role, extracellular matrix protein that plays a role in epidermal differentiation and is required for epidermal adhesion during embryonic development. The sequence is that of FRAS1-related extracellular matrix protein 1 from Homo sapiens (Human).